Consider the following 246-residue polypeptide: Large ribosomal subunit protein uL4 (246 aa).

The segment at 37-103 (AAQANRKQDY…TEKDRSLDLN (67 aa)) is disordered. Positions 92 to 103 (PKTEKDRSLDLN) are enriched in basic and acidic residues.

The protein belongs to the universal ribosomal protein uL4 family. In terms of assembly, part of the 50S ribosomal subunit. Interacts weakly with proteins L18e, L24 and L37e. Has been cross-linked to L18e.

One of the primary rRNA binding proteins, this protein initially binds near the 5'-end of the 23S rRNA. It is important during the early stages of 50S assembly. Its function is as follows. Makes multiple contacts with different domains of the 23S rRNA in the assembled 50S subunit. Functionally, forms part of the polypeptide exit tunnel, in which it helps forms a bend with protein L22. Contacts the macrolide antibiotic spiramycin in the polypeptide exit tunnel. The protein is Large ribosomal subunit protein uL4 (rpl4) of Haloarcula marismortui (strain ATCC 43049 / DSM 3752 / JCM 8966 / VKM B-1809) (Halobacterium marismortui).